We begin with the raw amino-acid sequence, 256 residues long: Pimeloyl-[acyl-carrier protein] methyl ester esterase (256 aa).

Residues 15 to 242 (HLVLLHGWGL…AAHAPFISHP (228 aa)) form the AB hydrolase-1 domain. Substrate-binding positions include Trp-22, 82 to 83 (SL), and 143 to 147 (FLALQ). The active-site Nucleophile is Ser-82. Active-site residues include Asp-207 and His-235. His-235 is a binding site for substrate.

Belongs to the AB hydrolase superfamily. Carboxylesterase BioH family. In terms of assembly, monomer.

It is found in the cytoplasm. It carries out the reaction 6-carboxyhexanoyl-[ACP] methyl ester + H2O = 6-carboxyhexanoyl-[ACP] + methanol + H(+). It participates in cofactor biosynthesis; biotin biosynthesis. The physiological role of BioH is to remove the methyl group introduced by BioC when the pimeloyl moiety is complete. It allows to synthesize pimeloyl-ACP via the fatty acid synthetic pathway through the hydrolysis of the ester bonds of pimeloyl-ACP esters. This is Pimeloyl-[acyl-carrier protein] methyl ester esterase from Escherichia coli O7:K1 (strain IAI39 / ExPEC).